A 599-amino-acid chain; its full sequence is Glycerophosphodiester phosphodiesterase domain-containing protein 5 (599 aa).

At 1 to 42 (MVKHQPLQYYEPQLCLSCLTGIYGCRWKRYQRSHDDTTKWER) the chain is on the cytoplasmic side. Disulfide bonds link cysteine 15–cysteine 18 and cysteine 25–cysteine 576. The helical transmembrane segment at 43-63 (LWFLILTSSFFLTLVWFYFWW) threads the bilayer. Residues 64 to 87 (EVHNDYNEINWFLYNRMGYWSDWS) are Extracellular-facing. Residues 88–108 (IPILVTTAAGFTYITVLLILA) traverse the membrane as a helical segment. The Cytoplasmic segment spans residues 109 to 125 (LCHIAVGQQMNLHWLHK). A helical transmembrane segment spans residues 126-146 (IGLMTTLITTVVTMSSIAQLW). Topologically, residues 147-160 (DDEWEMVFISLQAT) are extracellular. Residues 161–181 (APFLHIGALAAVTALSWLIAG) form a helical membrane-spanning segment. At 182–192 (QFARMEKATSQ) the chain is on the cytoplasmic side. Residues 193–213 (MLMVTAYLAVVVALYLVPLTI) traverse the membrane as a helical segment. Residues 214 to 497 (SSPCIMEKKA…IWLMPPDEYR (284 aa)) are Extracellular-facing. A GP-PDE domain is found at 228–485 (PAIIGHRGAP…DSSHVLRKVP (258 aa)). Asparagine 301, asparagine 336, asparagine 352, asparagine 374, and asparagine 448 each carry an N-linked (GlcNAc...) asparagine glycan. A helical transmembrane segment spans residues 498-518 (LIWITSDLISFIIIVGVFIFQ). Topologically, residues 519–599 (NYHNDQWRLG…DHRDTRLRMN (81 aa)) are cytoplasmic.

It belongs to the glycerophosphoryl diester phosphodiesterase family. In terms of assembly, interacts with PRDX1; forms a mixed-disulfide with PRDX1, leading to disrupt intramolecular disulfide bond between Cys-25 and Cys-576. In terms of processing, intramolecular disulfide bond between Cys-25 and Cys-576 is reduced by PRDX1. In terms of tissue distribution, detected in mature motor neurons.

Its subcellular location is the endomembrane system. It is found in the cytoplasm. The protein localises to the perinuclear region. The protein resides in the cell projection. It localises to the growth cone. It carries out the reaction a 1,2-diacyl-sn-glycero-3-phospho-(1D-myo-inositol-4,5-bisphosphate) + H2O = 1D-myo-inositol 1,4,5-trisphosphate + a 1,2-diacyl-sn-glycerol + H(+). The catalysed reaction is sn-glycerol 3-phosphocholine + H2O = sn-glycerol 3-phosphate + choline + H(+). Its activity is regulated as follows. Activated by PRDX1 by reduction of an intramolecular disulfide bond. Functionally, glycerophosphodiester phosphodiesterase that promotes cell cycle exit and drives spinal motor neuron differentiation. Mediates the cleavage of glycosylphosphatidylinositol (GPI) anchor of target proteins: removes the GPI-anchor of RECK, leading to release RECK from the plasma membrane. May contribute to the osmotic regulation of cellular glycerophosphocholine. The sequence is that of Glycerophosphodiester phosphodiesterase domain-containing protein 5 (GDPD5) from Gallus gallus (Chicken).